The primary structure comprises 83 residues: MKASMFLALAGLVLLFVVGYASGSEEKEFPRELLSKIFAVDDFKGEERGCKGFGDSCTPGKNECCPNYACSSKHKWCKVYLGK.

Residues 1–21 (MKASMFLALAGLVLLFVVGYA) form the signal peptide. A propeptide spanning residues 22 to 48 (SGSEEKEFPRELLSKIFAVDDFKGEER) is cleaved from the precursor. 3 cysteine pairs are disulfide-bonded: Cys50-Cys65, Cys57-Cys70, and Cys64-Cys77. A Leucine amide modification is found at Leu81.

Belongs to the neurotoxin 10 (Hwtx-1) family. 15 (Hntx-3) subfamily. As to quaternary structure, monomer. As to expression, expressed by the venom gland.

The protein resides in the secreted. In terms of biological role, selective antagonist of neuronal tetrodotoxin (TTX)-sensitive voltage-gated sodium channels (IC(50)=1270 nM on Nav1.1/SCN1A, 270 nM on Nav1.2/SCN2A, 491 nM on Nav1.3/SCN3A and 232 nM on Nav1.7/SCN9A). This toxin suppress Nav1.7 current amplitude without significantly altering the activation, inactivation, and repriming kinetics. Short extreme depolarizations partially activate the toxin-bound channel, indicating voltage-dependent inhibition of this toxin. This toxin increases the deactivation of the Nav1.7 current after extreme depolarizations. The toxin-Nav1.7 complex is gradually dissociated upon prolonged strong depolarizations in a voltage-dependent manner, and the unbound toxin rebinds to Nav1.7 after a long repolarization. Moreover, analysis of chimeric channels showed that the DIIS3-S4 linker is critical for toxin binding to Nav1.7. These data are consistent with this toxin interacting with Nav1.7 site 4 and trapping the domain II voltage sensor in the closed state. The sequence is that of Hainantoxin-III 12 from Cyriopagopus hainanus (Chinese bird spider).